Here is a 399-residue protein sequence, read N- to C-terminus: Enoyl-[acyl-carrier-protein] reductase [NADH] (399 aa).

NAD(+) contacts are provided by residues Gly-49–Tyr-54, Phe-75–Glu-76, Asp-112–Ala-113, and Leu-141–Ala-142. Residue Tyr-227 coordinates substrate. Tyr-237 acts as the Proton donor in catalysis. Residues Lys-246 and Val-272–Thr-274 contribute to the NAD(+) site.

It belongs to the TER reductase family. Monomer.

The catalysed reaction is a 2,3-saturated acyl-[ACP] + NAD(+) = a (2E)-enoyl-[ACP] + NADH + H(+). It participates in lipid metabolism; fatty acid biosynthesis. Functionally, involved in the final reduction of the elongation cycle of fatty acid synthesis (FAS II). Catalyzes the reduction of a carbon-carbon double bond in an enoyl moiety that is covalently linked to an acyl carrier protein (ACP). The protein is Enoyl-[acyl-carrier-protein] reductase [NADH] of Pseudomonas putida (strain W619).